A 1464-amino-acid polypeptide reads, in one-letter code: MFSFVDLRLLLLLAATALLTHGQEEGQVEGQDEDIPPITCVQNGLRYHDRDVWKPEPCRICVCDNGKVLCDDVICDETKNCPGAEVPEGECCPVCPDGSESPTDQETTGVEGPKGDTGPRGPRGPAGPPGRDGIPGQPGLPGPPGPPGPPGPPGLGGNFAPQLSYGYDEKSTGGISVPGPMGPSGPRGLPGPPGAPGPQGFQGPPGEPGEPGASGPMGPRGPPGPPGKNGDDGEAGKPGRPGERGPPGPQGARGLPGTAGLPGMKGHRGFSGLDGAKGDAGPAGPKGEPGSPGENGAPGQMGPRGLPGERGRPGAPGPAGARGNDGATGAAGPPGPTGPAGPPGFPGAVGAKGEAGPQGPRGSEGPQGVRGEPGPPGPAGAAGPAGNPGADGQPGAKGANGAPGIAGAPGFPGARGPSGPQGPGGPPGPKGNSGEPGAPGSKGDTGAKGEPGPVGVQGPPGPAGEEGKRGARGEPGPTGLPGPPGERGGPGSRGFPGADGVAGPKGPAGERGSPGPAGPKGSPGEAGRPGEAGLPGAKGLTGSPGSPGPDGKTGPPGPAGQDGRPGPPGPPGARGQAGVMGFPGPKGAAGEPGKAGERGVPGPPGAVGPAGKDGEAGAQGPPGPAGPAGERGEQGPAGSPGFQGLPGPAGPPGEAGKPGEQGVPGDLGAPGPSGARGERGFPGERGVQGPPGPAGPRGANGAPGNDGAKGDAGAPGAPGSQGAPGLQGMPGERGAAGLPGPKGDRGDAGPKGADGSPGKDGVRGLTGPIGPPGPAGAPGDKGESGPSGPAGPTGARGAPGDRGEPGPPGPAGFAGPPGADGQPGAKGEPGDAGAKGDAGPPGPAGPAGPPGPIGNVGAPGAKGARGSAGPPGATGFPGAAGRVGPPGPSGNAGPPGPPGPAGKEGGKGPRGETGPAGRPGEVGPPGPPGPAGEKGSPGADGPAGAPGTPGPQGIAGQRGVVGLPGQRGERGFPGLPGPSGEPGKQGPSGASGERGPPGPMGPPGLAGPPGESGREGAPGAEGSPGRDGSPGAKGDRGETGPAGPPGAPGAPGAPGPVGPAGKSGDRGETGPAGPAGPVGPVGARGPAGPQGPRGDKGETGEQGDRGIKGHRGFSGLQGPPGPPGSPGEQGPSGASGPAGPRGPPGSAGAPGKDGLNGLPGPIGPPGPRGRTGDAGPVGPPGPPGPPGPPGPPSAGFDFSFLPQPPQEKAHDGGRYYRADDANVVRDRDLEVDTTLKSLSQQIENIRSPEGSRKNPARTCRDLKMCHSDWKSGEYWIDPNQGCNLDAIKVFCNMETGETCVYPTQPSVAQKNWYISKNPKDKRHVWFGESMTDGFQFEYGGQGSDPADVAIQLTFLRLMSTEASQNITYHCKNSVAYMDQQTGNLKKALLLQGSNEIEIRAEGNSRFTYSVTVDGCTSHTGAWGKTVIEYKTTKTSRLPIIDVAPLDVGAPDQEFGFDVGPVCFL.

The signal sequence occupies residues 1–22; it reads MFSFVDLRLLLLLAATALLTHG. Positions 23–161 are cleaved as a propeptide — N-terminal propeptide; sequence QEEGQVEGQD…PPGLGGNFAP (139 aa). Residues 38 to 96 enclose the VWFC domain; it reads ITCVQNGLRYHDRDVWKPEPCRICVCDNGKVLCDDVICDETKNCPGAEVPEGECCPVCP. Residues 98–1214 are disordered; the sequence is GSESPTDQET…PQEKAHDGGR (1117 aa). Pro residues predominate over residues 138–153; that stretch reads PGLPGPPGPPGPPGPP. Gln162 bears the Pyrrolidone carboxylic acid mark. Residues 162–178 form a nonhelical region (N-terminal) region; the sequence is QLSYGYDEKSTGGISVP. An Allysine modification is found at Lys170. Ser171 bears the Phosphoserine mark. Positions 179–1192 are triple-helical region; it reads GPMGPSGPRG…PGPPGPPGPP (1014 aa). 4-hydroxyproline occurs at positions 190, 193, 196, 205, 208, 211, 226, 241, 247, 256, and 262. The span at 198 to 217 shows a compositional bias: low complexity; the sequence is PQGFQGPPGEPGEPGASGPM. Positions 229–243 are enriched in basic and acidic residues; the sequence is NGDDGEAGKPGRPGE. A 5-hydroxylysine; alternate modification is found at Lys265. Lys265 carries an O-linked (Gal...) hydroxylysine; alternate glycan. The residue at position 271 (Ser271) is a Phosphoserine. The segment covering 279 to 295 has biased composition (low complexity); the sequence is DAGPAGPKGEPGSPGEN. 4-hydroxyproline is present on residues Pro289, Pro292, Pro298, Pro307, and Pro313. A compositionally biased stretch (low complexity) spans 318–331; sequence PAGARGNDGATGAA. The segment covering 333–345 has biased composition (pro residues); it reads PPGPTGPAGPPGF. 4-hydroxyproline is present on residues Pro334, Pro343, Pro346, Pro373, Pro376, Pro388, Pro394, Pro403, Pro409, Pro412, and Pro427. Residues 379–418 show a composition bias toward low complexity; it reads AGAAGPAGNPGADGQPGAKGANGAPGIAGAPGFPGARGPS. Position 430 is a 5-hydroxylysine (Lys430). 4-hydroxyproline is present on residues Pro436, Pro439, Pro451, Pro460, Pro475, Pro481, Pro490, and Pro496. The span at 448–457 shows a compositional bias: low complexity; the sequence is KGEPGPVGVQ. Gly residues predominate over residues 485–494; it reads GERGGPGSRG. Position 505 is a 5-hydroxylysine (Lys505). 4-hydroxyproline is present on residues Pro514, Pro523, Pro529, Pro535, Pro544, Pro547, Pro556, Pro565, Pro571, Pro583, Pro592, Pro601, Pro604, Pro622, Pro640, Pro646, Pro652, Pro658, Pro664, Pro670, Pro682, Pro691, Pro703, Pro715, Pro718, Pro724, Pro730, and Pro739. Low complexity predominate over residues 538 to 564; sequence KGLTGSPGSPGPDGKTGPPGPAGQDGR. A compositionally biased stretch (low complexity) spans 573–592; the sequence is ARGQAGVMGFPGPKGAAGEP. Over residues 634-661 the composition is skewed to low complexity; it reads QGPAGSPGFQGLPGPAGPPGEAGKPGEQ. The span at 696–724 shows a compositional bias: low complexity; sequence PRGANGAPGNDGAKGDAGAPGAPGSQGAP. Positions 745-747 match the Cell attachment site motif; that stretch reads RGD. Lys751 carries the 5-hydroxylysine modification. Pro757, Pro772, and Pro778 each carry 4-hydroxyproline. Residues 784 to 798 show a composition bias toward low complexity; sequence SGPSGPAGPTGARGA. Residue Ser787 is modified to Phosphoserine. Pro799, Pro805, Pro808, Pro817, Pro823, Pro841, Pro850, and Pro859 each carry 4-hydroxyproline. Positions 811-838 are enriched in low complexity; it reads AGFAGPPGADGQPGAKGEPGDAGAKGDA. The span at 840–852 shows a compositional bias: pro residues; sequence PPGPAGPAGPPGP. Residues 853–883 show a composition bias toward low complexity; sequence IGNVGAPGAKGARGSAGPPGATGFPGAAGRV. A 5-hydroxylysine modification is found at Lys862. Pro871 and Pro877 each carry 4-hydroxyproline. Pro885 bears the 3-hydroxyproline mark. Pro886, Pro895, Pro898, Pro919, Pro928, Pro937, Pro946, Pro964, Pro973, Pro976, Pro982, Pro997, Pro1003, Pro1009, Pro1018, and Pro1024 each carry 4-hydroxyproline. A compositionally biased stretch (low complexity) spans 912-921; it reads ETGPAGRPGE. The segment covering 931-955 has biased composition (low complexity); that stretch reads AGEKGSPGADGPAGAPGTPGPQGIA. Residues 996–1006 are compositionally biased toward pro residues; sequence PPGPMGPPGLA. Position 1033 is a 5-hydroxylysine (Lys1033). The segment covering 1042-1057 has biased composition (pro residues); it reads AGPPGAPGAPGAPGPV. Pro1045, Pro1048, and Pro1051 each carry 4-hydroxyproline. A compositionally biased stretch (low complexity) spans 1078–1092; sequence VGPVGARGPAGPQGP. Residues 1093 to 1095 carry the Cell attachment site motif; it reads RGD. Positions 1093–1107 are enriched in basic and acidic residues; it reads RGDKGETGEQGDRGI. Lys1096 carries the 5-hydroxylysine modification. A 5-hydroxylysine; alternate modification is found at Lys1108. O-linked (Gal...) hydroxylysine; alternate glycosylation occurs at Lys1108. Pro1120, Pro1123, Pro1126, Pro1144, and Pro1159 each carry 4-hydroxyproline. The span at 1126-1159 shows a compositional bias: low complexity; it reads PGEQGPSGASGPAGPRGPPGSAGAPGKDGLNGLP. At Pro1164 the chain carries 3-hydroxyproline. Pro1165 bears the 4-hydroxyproline mark. Over residues 1177–1192 the composition is skewed to pro residues; sequence VGPPGPPGPPGPPGPP. At Pro1179 the chain carries 3-hydroxyproline. 4-hydroxyproline is present on Pro1180. Position 1182 is a 3-hydroxyproline (Pro1182). The residue at position 1183 (Pro1183) is a 4-hydroxyproline. Residue Pro1185 is modified to 3-hydroxyproline. Pro1186, Pro1189, and Pro1192 each carry 4-hydroxyproline. Residues 1193–1218 are nonhelical region (C-terminal); that stretch reads SAGFDFSFLPQPPQEKAHDGGRYYRA. Lys1208 carries the allysine modification. The propeptide at 1219-1464 is C-terminal propeptide; the sequence is DDANVVRDRD…GFDVGPVCFL (246 aa). Residues 1229–1464 enclose the Fibrillar collagen NC1 domain; the sequence is LEVDTTLKSL…GFDVGPVCFL (236 aa). Intrachain disulfides connect Cys1259–Cys1291, Cys1299–Cys1462, and Cys1370–Cys1415. 5 residues coordinate Ca(2+): Asp1277, Asn1279, Gln1280, Cys1282, and Asp1285. N-linked (GlcNAc...) asparagine glycosylation occurs at Asn1365.

The protein belongs to the fibrillar collagen family. In terms of assembly, trimers of one alpha 2(I) and two alpha 1(I) chains. Interacts with MRC2. Interacts with TRAM2. Interacts with MFAP4 in a Ca (2+)-dependent manner. Contains mostly 4-hydroxyproline. Proline residues at the third position of the tripeptide repeating unit (G-X-Y) are hydroxylated in some or all of the chains. In terms of processing, contains 3-hydroxyproline at a few sites. This modification occurs on the first proline residue in the sequence motif Gly-Pro-Hyp, where Hyp is 4-hydroxyproline. Post-translationally, lysine residues at the third position of the tripeptide repeating unit (G-X-Y) are 5-hydroxylated in some or all of the chains. O-glycosylated on hydroxylated lysine residues. The O-linked glycan consists of a Glc-Gal disaccharide. Forms the fibrils of tendon, ligaments and bones. In bones the fibrils are mineralized with calcium hydroxyapatite.

It is found in the secreted. It localises to the extracellular space. The protein localises to the extracellular matrix. Type I collagen is a member of group I collagen (fibrillar forming collagen). In Homo sapiens (Human), this protein is Collagen alpha-1(I) chain (COL1A1).